The chain runs to 103 residues: Pyrimidine/purine nucleoside phosphorylase (103 aa).

This sequence belongs to the nucleoside phosphorylase PpnP family.

It catalyses the reaction a purine D-ribonucleoside + phosphate = a purine nucleobase + alpha-D-ribose 1-phosphate. The catalysed reaction is adenosine + phosphate = alpha-D-ribose 1-phosphate + adenine. The enzyme catalyses cytidine + phosphate = cytosine + alpha-D-ribose 1-phosphate. It carries out the reaction guanosine + phosphate = alpha-D-ribose 1-phosphate + guanine. It catalyses the reaction inosine + phosphate = alpha-D-ribose 1-phosphate + hypoxanthine. The catalysed reaction is thymidine + phosphate = 2-deoxy-alpha-D-ribose 1-phosphate + thymine. The enzyme catalyses uridine + phosphate = alpha-D-ribose 1-phosphate + uracil. It carries out the reaction xanthosine + phosphate = alpha-D-ribose 1-phosphate + xanthine. Functionally, catalyzes the phosphorolysis of diverse nucleosides, yielding D-ribose 1-phosphate and the respective free bases. Can use uridine, adenosine, guanosine, cytidine, thymidine, inosine and xanthosine as substrates. Also catalyzes the reverse reactions. In Shewanella frigidimarina (strain NCIMB 400), this protein is Pyrimidine/purine nucleoside phosphorylase.